Consider the following 420-residue polypeptide: MDAFKVIGGKPLRGDVVISGAKNAALPILMSALLSKTPVVFSNVPQLNDILTTVKLLGQLGAKTKWLNEEKLMIDASSIDVCRAPYDLVKTMRASILVLGPLLARMGHAEVSLPGGCAIGARPVNLHIQGLKLMGADITVEDGYIVAKKQGRLTGATIFMDTVSVTGTENLMMAAALAEGITIIENAAREPEIVDLANCLISMGAKITGAGTDTLTIEGVSELCGKEYSVMPDRIETGTFLVAAAVTQGHIKCLNTDPSSLEAVLSKLQEAGATITTGDDWIELEMSAPAKAVNVRTAPHPAFPTDMQAQFMTMNVLAEGTATVIETIFENRFMHVPELQRMGADIALEGNTAIVKGVASLNGAQVMATDLRASASLVIAGLVAKSPTQVDRIYHIDRGYLCIEGKLQSLGADITRIKVD.

Residue 22 to 23 (KN) participates in phosphoenolpyruvate binding. Arg93 is a UDP-N-acetyl-alpha-D-glucosamine binding site. The active-site Proton donor is the Cys117. Cys117 carries the 2-(S-cysteinyl)pyruvic acid O-phosphothioketal modification. UDP-N-acetyl-alpha-D-glucosamine contacts are provided by Asp306 and Ile328.

Belongs to the EPSP synthase family. MurA subfamily.

The protein resides in the cytoplasm. The catalysed reaction is phosphoenolpyruvate + UDP-N-acetyl-alpha-D-glucosamine = UDP-N-acetyl-3-O-(1-carboxyvinyl)-alpha-D-glucosamine + phosphate. It functions in the pathway cell wall biogenesis; peptidoglycan biosynthesis. Cell wall formation. Adds enolpyruvyl to UDP-N-acetylglucosamine. The protein is UDP-N-acetylglucosamine 1-carboxyvinyltransferase of Colwellia psychrerythraea (strain 34H / ATCC BAA-681) (Vibrio psychroerythus).